The chain runs to 455 residues: tRNA modification GTPase MnmE (455 aa).

(6S)-5-formyl-5,6,7,8-tetrahydrofolate-binding residues include Arg-23, Glu-85, and Arg-124. The region spanning 220 to 375 (GVSVVIAGKP…LQDAIFEAFI (156 aa)) is the TrmE-type G domain. Asn-230 contributes to the K(+) binding site. GTP is bound by residues 230-235 (NVGKSS), 249-255 (TSVPGTT), and 274-277 (DTAG). Residue Ser-234 participates in Mg(2+) binding. K(+) contacts are provided by Thr-249, Val-251, and Thr-254. A Mg(2+)-binding site is contributed by Thr-255. Lys-455 provides a ligand contact to (6S)-5-formyl-5,6,7,8-tetrahydrofolate.

The protein belongs to the TRAFAC class TrmE-Era-EngA-EngB-Septin-like GTPase superfamily. TrmE GTPase family. As to quaternary structure, homodimer. Heterotetramer of two MnmE and two MnmG subunits. K(+) serves as cofactor.

Its subcellular location is the cytoplasm. Functionally, exhibits a very high intrinsic GTPase hydrolysis rate. Involved in the addition of a carboxymethylaminomethyl (cmnm) group at the wobble position (U34) of certain tRNAs, forming tRNA-cmnm(5)s(2)U34. The sequence is that of tRNA modification GTPase MnmE from Geotalea uraniireducens (strain Rf4) (Geobacter uraniireducens).